The chain runs to 2850 residues: Mucin-6 (2850 aa).

The first 22 residues, 1–22, serve as a signal peptide directing secretion; it reads MLRVRQLLLLLLFRGPLIDAGA. In terms of domain architecture, VWFD 1 spans 43–256; the sequence is GWCSTWGAGH…KLDDPNEICA (214 aa). 2 disulfides stabilise this stretch: cysteine 45–cysteine 218 and cysteine 67–cysteine 255. Asparagine 94 carries N-linked (GlcNAc...) asparagine glycosylation. Residues 160–183 form a disordered region; the sequence is HLTEGQGGDEVGTPGTLKQESKGS. An N-linked (GlcNAc...) asparagine glycan is attached at asparagine 310. Residues 344 to 399 form the TIL 1 domain; sequence CPANQVYQECGEVCIKTCSNPQHSCSSPCTFGCFCPHGTLLDDISGNQSCVPVNQC. The region spanning 437 to 621 is the VWFD 2 domain; it reads GHCSLEGGSF…ALEREMDPCS (185 aa). 2 cysteine pairs are disulfide-bonded: cysteine 439-cysteine 575 and cysteine 461-cysteine 620. 2 N-linked (GlcNAc...) asparagine glycosylation sites follow: asparagine 528 and asparagine 701. The TIL 2 domain maps to 806-869; that stretch reads CPEPKTFQSC…DGQCVPAEEC (64 aa). One can recognise a VWFD 3 domain in the interval 908–1080; it reads STCVLYGEGH…NSWKESPLCG (173 aa). 4 cysteine pairs are disulfide-bonded: cysteine 910–cysteine 1044, cysteine 932–cysteine 1079, cysteine 941–cysteine 1041, and cysteine 959–cysteine 966. Residues asparagine 1017 and asparagine 1221 are each glycosylated (N-linked (GlcNAc...) asparagine). Residues 1263-1281 are compositionally biased toward low complexity; the sequence is EFHSSTSANTPVAPSYLPG. Disordered stretches follow at residues 1263–1363, 1377–1400, 1466–1504, 1580–1600, 1626–1650, 1705–1813, 1877–1942, 1968–1992, 2049–2119, 2219–2254, 2276–2295, 2306–2338, 2370–2473, 2511–2621, 2634–2674, and 2692–2761; these read EFHS…TAEL, GMST…THRV, VSAN…PSTT, TPPV…RTTH, IASP…TSSV, TKTS…SLST, QTKS…RTTH, TSFS…PSTT, QTKS…TTNS, IAHT…SSTT, EQST…SPTD, TTPP…FRTP, PTNP…TFVS, PTIH…KSTT, and STMG…GTCS. A compositionally biased stretch (polar residues) spans 1294–1312; sequence EELTVWTTPKESTVSSGEY. Residues 1345 to 1363 are compositionally biased toward low complexity; it reads TSKPTASSLSSSTKTTAEL. 2 stretches are compositionally biased toward polar residues: residues 1378–1399 and 1466–1484; these read MSTS…TTHR and VSAN…PVVH. Tandem repeats lie at residues 1440 to 1555, 1556 to 1712, 1713 to 1885, 1886 to 2054, 2055 to 2227, 2228 to 2396, 2397 to 2563, and 2564 to 2671. The tract at residues 1440–2671 is approximate repeats; sequence TQNLFSTAPH…VPTFSSFSSK (1232 aa). Residues 1485–1504 are compositionally biased toward low complexity; it reads TTSGTSSSPQTPRTTHPSTT. Positions 1626 to 1639 are enriched in polar residues; the sequence is IASPTPSAPQTSLA. Positions 1705 to 1719 are enriched in low complexity; it reads TKTSFSTDRTSTSTS. Residues 1720-1757 are compositionally biased toward polar residues; that stretch reads APHLSETSAVTAHQSTPTAVSANSIKPTMSSTGTPVVH. The span at 1758–1777 shows a compositional bias: low complexity; the sequence is TTSGTTSSPQTPRTTHPSTT. The span at 1778–1813 shows a compositional bias: polar residues; sequence VAVSGTVHTTGLPSGTSVHTTTNFPTHSGPQSSLST. Residues 1893 to 1942 are compositionally biased toward low complexity; it reads SQPSTVTPTQSTPIPATTNSLMTTGGLTGTPPVHTTSGTTSSPQTPRTTH. Residues 1968 to 1981 are compositionally biased toward polar residues; that stretch reads IASPTPSAPQTSLA. Residues 2049-2061 are compositionally biased toward low complexity; it reads TSFSTDRTSTSTS. The span at 2062 to 2099 shows a compositional bias: polar residues; that stretch reads APHLSETSAVTAHQSTPTAVSANSIKPTMSSTGTPVVH. The span at 2100 to 2119 shows a compositional bias: low complexity; sequence TTSGTTSSPQTPRTTHPSTT. A compositionally biased stretch (polar residues) spans 2227–2238; the sequence is DRTSTPHLSQSS. Over residues 2282-2295 the composition is skewed to low complexity; that stretch reads TTHSLPTAASSSTT. The segment covering 2370–2384 has biased composition (low complexity); that stretch reads TTPPNTSTPVTHSTS. Over residues 2385-2429 the composition is skewed to polar residues; sequence ATTEAQGSFSTERTSTSYLSHPSSTTVHQSTAGPVITSIKSTMGV. The segment covering 2436–2456 has biased composition (low complexity); the sequence is HTTSGTTSSPQTPHSTHPIST. Over residues 2457-2466 the composition is skewed to polar residues; sequence AAISRTTGIS. Positions 2516–2533 are enriched in low complexity; that stretch reads SVSSASTSRPLSTSLPTT. A compositionally biased stretch (polar residues) spans 2534–2560; that stretch reads IKGTGTPQTPVSDINTTSATTQAHSSF. Over residues 2561–2584 the composition is skewed to low complexity; sequence PTTRTSTSHLSLPSSMTSTLTPAS. The segment covering 2585-2601 has biased composition (polar residues); the sequence is RSASTLQYTPTPSSVSH. Low complexity predominate over residues 2639 to 2674; it reads TPTPSSRPTSSTGLLSTSKTTSHVPTFSSFSSKSTT. The span at 2692–2725 shows a compositional bias: polar residues; sequence STMGMTNLPSSGSPDINHTTRPPGSSPLPTSAFL. The span at 2726–2759 shows a compositional bias: low complexity; it reads SRSTSPTGSSSPSTPVSSSNPDSSVSSPPSHPGT. Disulfide bonds link cysteine 2760–cysteine 2807, cysteine 2774–cysteine 2821, cysteine 2783–cysteine 2841, and cysteine 2787–cysteine 2843. In terms of domain architecture, CTCK spans 2760 to 2849; sequence CSLQEEEHQI…SCVCSPLQCK (90 aa).

Multimer; disulfide-linked. In terms of processing, O-glycosylated. In terms of tissue distribution, expressed in stomach, duodenum and small intestine.

The protein localises to the secreted. Functionally, may provide a mechanism for modulation of the composition of the protective mucus layer related to acid secretion or the presence of bacteria and noxious agents in the lumen. Plays an important role in the cytoprotection of epithelial surfaces and are used as tumor markers in a variety of cancers. May play a role in epithelial organogenesis. The polypeptide is Mucin-6 (Muc6) (Mus musculus (Mouse)).